The following is a 770-amino-acid chain: 1,4-alpha-glucan branching enzyme GlgB (770 aa).

Catalysis depends on D437, which acts as the Nucleophile. The Proton donor role is filled by E488.

It belongs to the glycosyl hydrolase 13 family. GlgB subfamily. As to quaternary structure, monomer.

It carries out the reaction Transfers a segment of a (1-&gt;4)-alpha-D-glucan chain to a primary hydroxy group in a similar glucan chain.. The protein operates within glycan biosynthesis; glycogen biosynthesis. Functionally, catalyzes the formation of the alpha-1,6-glucosidic linkages in glycogen by scission of a 1,4-alpha-linked oligosaccharide from growing alpha-1,4-glucan chains and the subsequent attachment of the oligosaccharide to the alpha-1,6 position. In Synechococcus sp. (strain JA-3-3Ab) (Cyanobacteria bacterium Yellowstone A-Prime), this protein is 1,4-alpha-glucan branching enzyme GlgB.